Reading from the N-terminus, the 100-residue chain is NADH-quinone oxidoreductase subunit K (100 aa).

The next 3 membrane-spanning stretches (helical) occupy residues 2 to 22 (ITLS…LIGI), 29 to 49 (IMLF…LAAI), and 63 to 83 (LFIV…LILW).

It belongs to the complex I subunit 4L family. In terms of assembly, NDH-1 is composed of 14 different subunits. Subunits NuoA, H, J, K, L, M, N constitute the membrane sector of the complex.

The protein resides in the cell inner membrane. It catalyses the reaction a quinone + NADH + 5 H(+)(in) = a quinol + NAD(+) + 4 H(+)(out). NDH-1 shuttles electrons from NADH, via FMN and iron-sulfur (Fe-S) centers, to quinones in the respiratory chain. The immediate electron acceptor for the enzyme in this species is believed to be ubiquinone. Couples the redox reaction to proton translocation (for every two electrons transferred, four hydrogen ions are translocated across the cytoplasmic membrane), and thus conserves the redox energy in a proton gradient. The sequence is that of NADH-quinone oxidoreductase subunit K from Campylobacter curvus (strain 525.92).